Reading from the N-terminus, the 432-residue chain is 3-phosphoshikimate 1-carboxyvinyltransferase (432 aa).

Positions 23, 24, and 28 each coordinate 3-phosphoshikimate. Lys23 serves as a coordination point for phosphoenolpyruvate. Residues Gly99 and Arg127 each contribute to the phosphoenolpyruvate site. Residues Ser172, Ser173, Gln174, Ser200, Asp317, Asn341, and Lys345 each contribute to the 3-phosphoshikimate site. Gln174 serves as a coordination point for phosphoenolpyruvate. Asp317 acts as the Proton acceptor in catalysis. Phosphoenolpyruvate is bound by residues Arg349, Arg391, and Lys416.

The protein belongs to the EPSP synthase family. In terms of assembly, monomer.

The protein localises to the cytoplasm. It carries out the reaction 3-phosphoshikimate + phosphoenolpyruvate = 5-O-(1-carboxyvinyl)-3-phosphoshikimate + phosphate. Its pathway is metabolic intermediate biosynthesis; chorismate biosynthesis; chorismate from D-erythrose 4-phosphate and phosphoenolpyruvate: step 6/7. In terms of biological role, catalyzes the transfer of the enolpyruvyl moiety of phosphoenolpyruvate (PEP) to the 5-hydroxyl of shikimate-3-phosphate (S3P) to produce enolpyruvyl shikimate-3-phosphate and inorganic phosphate. The sequence is that of 3-phosphoshikimate 1-carboxyvinyltransferase from Blochmanniella pennsylvanica (strain BPEN).